The primary structure comprises 378 residues: D-alanine--D-alanine ligase (378 aa).

The 226-residue stretch at 149 to 374 folds into the ATP-grasp domain; sequence KVLLAAAGIP…YTDLITKLIE (226 aa). 189–247 provides a ligand contact to ATP; it reads EAGLQYPLFVKPSRAGSSFGVTKVEHEGDAAELAAAVYEASRHDWRILVEQGIDAREIE. Mg(2+) contacts are provided by Asp-328, Glu-341, and Asn-343.

The protein belongs to the D-alanine--D-alanine ligase family. Mg(2+) serves as cofactor. It depends on Mn(2+) as a cofactor.

It localises to the cytoplasm. The catalysed reaction is 2 D-alanine + ATP = D-alanyl-D-alanine + ADP + phosphate + H(+). It participates in cell wall biogenesis; peptidoglycan biosynthesis. Cell wall formation. The protein is D-alanine--D-alanine ligase of Bifidobacterium adolescentis (strain ATCC 15703 / DSM 20083 / NCTC 11814 / E194a).